Here is a 418-residue protein sequence, read N- to C-terminus: MTSYQPNLLVPPEVLSVKGLTDYIQTLLEDDSYLVQVWVEGEVSSAARHRSGFFFTLQDQQEAASIHCVIWNSYCDQLVIEPEVGEQILALGRIRVYPQRGQYQLMAWQLFPAGEGLRSLRYQQLRERLTREGLFDPLQKQALPTYPQTVGVVTSHQAAAWGDIKRTLKAQHPGLKVLFSPTKVQGKQAPEAIVLAIERVIKDGRAEVLIVARGGGATEDLACFNDERVVRAIAECPIPVISGIGHQRDETLADLVADVCAHTPTAAAECIPRLTDWQTDYRNCIARLYIILTRQLDVAHEHLLYQKTRLRRLQIDRQFEREQVLRSRLQNHLLHAIKHRLGQAQQHQQLLQQQLTSLDPTQVLKRGYALVQTTDQQIVRSTQQLQVDQELKVELAEGHFTARVTALQSSPQEADDER.

The protein belongs to the XseA family. As to quaternary structure, heterooligomer composed of large and small subunits.

It localises to the cytoplasm. The catalysed reaction is Exonucleolytic cleavage in either 5'- to 3'- or 3'- to 5'-direction to yield nucleoside 5'-phosphates.. In terms of biological role, bidirectionally degrades single-stranded DNA into large acid-insoluble oligonucleotides, which are then degraded further into small acid-soluble oligonucleotides. The polypeptide is Exodeoxyribonuclease 7 large subunit (Acaryochloris marina (strain MBIC 11017)).